A 312-amino-acid chain; its full sequence is Acetyl-coenzyme A carboxylase carboxyl transferase subunit alpha (312 aa).

The region spanning 36–286 is the CoA carboxyltransferase C-terminal domain; it reads RLDKEVKSIY…KEYFLDALRT (251 aa).

Belongs to the AccA family. As to quaternary structure, acetyl-CoA carboxylase is a heterohexamer composed of biotin carboxyl carrier protein (AccB), biotin carboxylase (AccC) and two subunits each of ACCase subunit alpha (AccA) and ACCase subunit beta (AccD).

The protein resides in the cytoplasm. It catalyses the reaction N(6)-carboxybiotinyl-L-lysyl-[protein] + acetyl-CoA = N(6)-biotinyl-L-lysyl-[protein] + malonyl-CoA. It functions in the pathway lipid metabolism; malonyl-CoA biosynthesis; malonyl-CoA from acetyl-CoA: step 1/1. Functionally, component of the acetyl coenzyme A carboxylase (ACC) complex. First, biotin carboxylase catalyzes the carboxylation of biotin on its carrier protein (BCCP) and then the CO(2) group is transferred by the carboxyltransferase to acetyl-CoA to form malonyl-CoA. The polypeptide is Acetyl-coenzyme A carboxylase carboxyl transferase subunit alpha (Helicobacter pylori (strain ATCC 700392 / 26695) (Campylobacter pylori)).